A 685-amino-acid polypeptide reads, in one-letter code: Mitotic interactor and substrate of PLK1 (685 aa).

A Phosphoserine; by CDK1 modification is found at Ser-78. Disordered regions lie at residues 155–181 (SGTV…STPL) and 207–253 (NKEV…QGKG). Residue Thr-172 is modified to Phosphothreonine; by CDK1. At Thr-179 the chain carries Phosphothreonine. At Ser-214 the chain carries Phosphoserine; by CDK1. Thr-219 carries the post-translational modification Phosphothreonine. Ser-284 bears the Phosphoserine; by CDK1 mark. Thr-287 is subject to Phosphothreonine; by CDK1. The tract at residues 345-499 (GRPSLYVQRD…PWKLPRGSPQ (155 aa)) is disordered. The residue at position 348 (Ser-348) is a Phosphoserine. Over residues 355–371 (MVQETQREEDHRREGLH) the composition is skewed to basic and acidic residues. Thr-377 is modified (phosphothreonine; by CDK1). Ser-382 carries the post-translational modification Phosphoserine. Low complexity predominate over residues 392-417 (ALSSDSILSPDSILSPAPDARAADPA). Ser-394, Ser-395, and Ser-397 each carry phosphoserine; by PLK1. Ser-406 and Ser-436 each carry phosphoserine. The segment covering 454–469 (SGLSTVDTEAATSPKA) has biased composition (polar residues). Phosphoserine; by PLK1 is present on Ser-477. A compositionally biased stretch (polar residues) spans 478 to 488 (ESSGKPMSTKQ). Phosphoserine occurs at positions 547 and 549. Positions 551–575 (DLLERERESVLRREREVAEERRNAL) form a coiled coil. 2 disordered regions span residues 575–607 (LFPE…SYSV) and 629–651 (PVDS…NPSD). Ser-581 is subject to Phosphoserine; by PLK1. The residue at position 583 (Thr-583) is a Phosphothreonine. Residues 589–607 (DQNSRSSSQASGITGSYSV) show a composition bias toward polar residues. Phosphoserine; by PLK1 is present on Ser-592. Position 681 is a phosphoserine (Ser-681).

The protein belongs to the MISP family. In terms of assembly, associates with F-actin. Interacts with DCTN1; this interaction regulates DCTN1 distribution at the cell cortex. Interacts with PTK2/FAK and MAPRE1. Post-translationally, phosphorylated by CDK1 and PLK1. CDK1 is the priming kinase for PLK1 phosphorylation. Phosphorylation by PLK1 is required for proper spindle orientation at metaphase.

The protein localises to the cell junction. It localises to the focal adhesion. The protein resides in the cytoplasm. It is found in the cytoskeleton. Its subcellular location is the cell cortex. In terms of biological role, plays a role in mitotic spindle orientation and mitotic progression. Regulates the distribution of dynactin at the cell cortex in a PLK1-dependent manner, thus stabilizing cortical and astral microtubule attachments required for proper mitotic spindle positioning. May link microtubules to the actin cytospkeleton and focal adhesions. May be required for directed cell migration and centrosome orientation. May also be necessary for proper stacking of the Golgi apparatus. The chain is Mitotic interactor and substrate of PLK1 from Pongo abelii (Sumatran orangutan).